The chain runs to 99 residues: PE family immunomodulator PE35 (99 aa).

The region spanning 1–90 (MEKMSHDPIA…DVARTYSQID (90 aa)) is the PE domain.

This sequence belongs to the mycobacterial PE family. Interacts with PPE68. PE35/PPE68 complex interacts with human TLR2.

The protein localises to the secreted. It is found in the cell surface. Its function is as follows. Plays a major role in RD1-associated pathogenesis, and may contribute to the establishment and maintenance of M.tuberculosis infection. Together with PPE68, stimulates the secretion of IL-10 and MCP-1 from human macrophages, via the interaction with human Toll-like receptor 2 (TLR2). The sequence is that of PE family immunomodulator PE35 (PE35) from Mycobacterium tuberculosis (strain ATCC 25618 / H37Rv).